We begin with the raw amino-acid sequence, 324 residues long: ATP phosphoribosyltransferase regulatory subunit (324 aa).

The protein belongs to the class-II aminoacyl-tRNA synthetase family. HisZ subfamily. Heteromultimer composed of HisG and HisZ subunits.

It localises to the cytoplasm. The protein operates within amino-acid biosynthesis; L-histidine biosynthesis; L-histidine from 5-phospho-alpha-D-ribose 1-diphosphate: step 1/9. Its function is as follows. Required for the first step of histidine biosynthesis. May allow the feedback regulation of ATP phosphoribosyltransferase activity by histidine. This chain is ATP phosphoribosyltransferase regulatory subunit, found in Carboxydothermus hydrogenoformans (strain ATCC BAA-161 / DSM 6008 / Z-2901).